An 80-amino-acid polypeptide reads, in one-letter code: Cytochrome c-553 (80 aa).

Positions 13, 16, 17, and 58 each coordinate heme c.

Binds 1 heme c group covalently per subunit.

It localises to the periplasm. In terms of biological role, natural electron acceptor for a formate dehydrogenase. The protein is Cytochrome c-553 of Desulfomicrobium norvegicum (strain DSM 1741 / NCIMB 8310) (Desulfovibrio baculatus (strain Norway 4)).